The following is a 112-amino-acid chain: T cell receptor alpha variable 34 (112 aa).

The first 21 residues, Met-1–Ser-21, serve as a signal peptide directing secretion. Residues Gln-22–Asp-112 enclose the Ig-like domain. Residues Asn-38 and Asn-42 are each glycosylated (N-linked (GlcNAc...) asparagine). Cys-43 and Cys-109 are joined by a disulfide.

As to quaternary structure, alpha-beta TR is a heterodimer composed of an alpha and beta chain; disulfide-linked. The alpha-beta TR is associated with the transmembrane signaling CD3 coreceptor proteins to form the TR-CD3 (TcR or TCR). The assembly of alpha-beta TR heterodimers with CD3 occurs in the endoplasmic reticulum where a single alpha-beta TR heterodimer associates with one CD3D-CD3E heterodimer, one CD3G-CD3E heterodimer and one CD247 homodimer forming a stable octameric structure. CD3D-CD3E and CD3G-CD3E heterodimers preferentially associate with TR alpha and TR beta chains, respectively. The association of the CD247 homodimer is the last step of TcR assembly in the endoplasmic reticulum and is required for transport to the cell surface.

It localises to the cell membrane. In terms of biological role, v region of the variable domain of T cell receptor (TR) alpha chain that participates in the antigen recognition. Alpha-beta T cell receptors are antigen specific receptors which are essential to the immune response and are present on the cell surface of T lymphocytes. Recognize peptide-major histocompatibility (MH) (pMH) complexes that are displayed by antigen presenting cells (APC), a prerequisite for efficient T cell adaptive immunity against pathogens. Binding of alpha-beta TR to pMH complex initiates TR-CD3 clustering on the cell surface and intracellular activation of LCK that phosphorylates the ITAM motifs of CD3G, CD3D, CD3E and CD247 enabling the recruitment of ZAP70. In turn ZAP70 phosphorylates LAT, which recruits numerous signaling molecules to form the LAT signalosome. The LAT signalosome propagates signal branching to three major signaling pathways, the calcium, the mitogen-activated protein kinase (MAPK) kinase and the nuclear factor NF-kappa-B (NF-kB) pathways, leading to the mobilization of transcription factors that are critical for gene expression and essential for T cell growth and differentiation. The T cell repertoire is generated in the thymus, by V-(D)-J rearrangement. This repertoire is then shaped by intrathymic selection events to generate a peripheral T cell pool of self-MH restricted, non-autoaggressive T cells. Post-thymic interaction of alpha-beta TR with the pMH complexes shapes TR structural and functional avidity. The chain is T cell receptor alpha variable 34 from Homo sapiens (Human).